A 241-amino-acid chain; its full sequence is MTTNPKPAYQRILLKLSGEALQGSEGFGIDPTVLDRMAQEVKELVELGVQVGVVIGGGNLFRGAGLAQAGMNRVVGDHMGMLATVMNGLAMRDALHRAYVNARVMSAIPLNGVCDDYNWADAIRELRQGRVVIFAAGTGNPFFTTDSAACLRGIEIEADVVLKATKVDGVFTADPVANPDAELYDKLSYTDVLEKELKVMDLAAFTLARDHKMPIRVFNMNKPGALRRVVMGEAEGTLITA.

15 to 18 contributes to the ATP binding site; the sequence is KLSG. The tract at residues 23 to 28 is involved in allosteric activation by GTP; it reads GSEGFG. Gly-57 is a binding site for UMP. Residues Gly-58 and Arg-62 each coordinate ATP. UMP contacts are provided by residues Asp-77 and 138 to 145; that span reads TGNPFFTT. ATP is bound by residues Thr-165, Phe-171, and Asp-174.

This sequence belongs to the UMP kinase family. In terms of assembly, homohexamer.

The protein localises to the cytoplasm. It carries out the reaction UMP + ATP = UDP + ADP. It functions in the pathway pyrimidine metabolism; CTP biosynthesis via de novo pathway; UDP from UMP (UMPK route): step 1/1. Its activity is regulated as follows. Allosterically activated by GTP. Inhibited by UTP. Catalyzes the reversible phosphorylation of UMP to UDP. This is Uridylate kinase from Vibrio vulnificus (strain CMCP6).